The chain runs to 261 residues: Kallikrein 1-related peptidase b9 (261 aa).

A signal peptide spans 1–18 (MRFLILFLALSLGGIDAA). A propeptide spans 19–24 (PPVHSR) (activation peptide). One can recognise a Peptidase S1 domain in the interval 25 to 258 (IVGGFKCEKN…FTSWIKDTMA (234 aa)). 5 cysteine pairs are disulfide-bonded: Cys-31/Cys-173, Cys-50/Cys-66, Cys-152/Cys-219, Cys-184/Cys-198, and Cys-209/Cys-234. His-65 acts as the Charge relay system in catalysis. N-linked (GlcNAc...) asparagine glycosylation is present at Asn-102. Asp-120 (charge relay system) is an active-site residue. The active-site Charge relay system is Ser-213.

Belongs to the peptidase S1 family. Kallikrein subfamily.

It catalyses the reaction Preferential cleavage of Arg-|-Xaa bonds in small molecule substrates. Highly selective action to release kallidin (lysyl-bradykinin) from kininogen involves hydrolysis of Met-|-Xaa or Leu-|-Xaa.. Functionally, glandular kallikreins cleave Met-Lys and Arg-Ser bonds in kininogen to release Lys-bradykinin. The sequence is that of Kallikrein 1-related peptidase b9 (Klk1b9) from Mus musculus (Mouse).